Reading from the N-terminus, the 291-residue chain is Pantothenate synthetase 1 (291 aa).

His-37 (proton donor) is an active-site residue. Residue 147 to 150 (GEKD) participates in ATP binding. Residue Gln-153 participates in (R)-pantoate binding. 184–187 (ISSR) serves as a coordination point for ATP.

It belongs to the pantothenate synthetase family. In terms of assembly, homodimer.

The protein resides in the cytoplasm. It catalyses the reaction (R)-pantoate + beta-alanine + ATP = (R)-pantothenate + AMP + diphosphate + H(+). It functions in the pathway cofactor biosynthesis; (R)-pantothenate biosynthesis; (R)-pantothenate from (R)-pantoate and beta-alanine: step 1/1. Its function is as follows. Catalyzes the condensation of pantoate with beta-alanine in an ATP-dependent reaction via a pantoyl-adenylate intermediate. This is Pantothenate synthetase 1 from Frankia alni (strain DSM 45986 / CECT 9034 / ACN14a).